Consider the following 471-residue polypeptide: Cysteine--tRNA ligase (471 aa).

Cys29 provides a ligand contact to Zn(2+). Positions Pro31–Asn41 match the 'HIGH' region motif. Residues Cys209, His234, and Glu238 each coordinate Zn(2+). Positions Lys266–Ser270 match the 'KMSKS' region motif. Lys269 serves as a coordination point for ATP.

Belongs to the class-I aminoacyl-tRNA synthetase family. Monomer. Zn(2+) serves as cofactor.

Its subcellular location is the cytoplasm. The catalysed reaction is tRNA(Cys) + L-cysteine + ATP = L-cysteinyl-tRNA(Cys) + AMP + diphosphate. The polypeptide is Cysteine--tRNA ligase (Listeria welshimeri serovar 6b (strain ATCC 35897 / DSM 20650 / CCUG 15529 / CIP 8149 / NCTC 11857 / SLCC 5334 / V8)).